The following is a 385-amino-acid chain: Leucine aminopeptidase 1 (385 aa).

The N-terminal stretch at 1–19 is a signal peptide; it reads MKFPNLLSLGVAASTTVLA. Residues 20–87 constitute a propeptide that is removed on maturation; it reads AVPNQKPIGD…FPRTFAQTTV (68 aa). Residue asparagine 177 is glycosylated (N-linked (GlcNAc...) asparagine). Zn(2+) is bound by residues histidine 185, aspartate 204, glutamate 243, and aspartate 270. Cysteine 319 and cysteine 323 form a disulfide bridge. A Zn(2+)-binding site is contributed by histidine 352.

It belongs to the peptidase M28 family. M28E subfamily. Monomer. It depends on Zn(2+) as a cofactor.

It localises to the secreted. Its function is as follows. Extracellular aminopeptidase that allows assimilation of proteinaceous substrates. In Ajellomyces capsulatus (strain H88) (Darling's disease fungus), this protein is Leucine aminopeptidase 1 (LAP1).